A 172-amino-acid polypeptide reads, in one-letter code: MSSLVKEDLEKKLFKPLAQNLCEFIEIEVSVQDRYFLCVSVTKTDEVKITMVKHYRVGLDEKYEVTKRWSLSDLRMIDGKEADTDNPFFDLHFKKVYSLEAYSCASKYSFARTVSRLNHVYLKKDLHMVNFDSTYINDDSIWSSNNKDCLVLMRICFYAFNLVCLSLCPLPL.

This Mus musculus (Mouse) protein is Exocyst complex component 1-like.